Reading from the N-terminus, the 88-residue chain is Enticin (88 aa).

The first 19 residues, 1-19, serve as a signal peptide directing secretion; that stretch reads MKTALPLLLLTCLVAAVQS. Disulfide bonds link C25–C33, C40–C52, and C59–C67. A propeptide spanning residues 69 to 88 is cleaved from the precursor; that stretch reads REQSQLNHDHLNNHTTTQQP.

Binds to attractin and temptin.

The protein localises to the secreted. Its function is as follows. A component of the complex of water-borne protein pheromones that stimulates attraction and mating behavior. The protein is Enticin of Aplysia californica (California sea hare).